Reading from the N-terminus, the 238-residue chain is MRIMASPFAVLLQNVSFRYTADARFILHEVDLAIPKGAYLSVVGENGSGKSTLVKLVLKLLKPSTGTIAHFVQRVGSVPQTKMHTLYFPLTVYEMLNSYRRLLRISHKWVVDAVLEEVGMRGAKKKLVYTLSGGELQKVYIARSLIGDPDLLVLDELSTGIDSRGQKDIYALLKGLNTSRNVTVISVEHNLDAAITNSTQIFHLSEGHGHLCNPQQYVSEFLDMQKKDALACAQCRSR.

The ABC transporter domain occupies 10 to 231; the sequence is VLLQNVSFRY…LDMQKKDALA (222 aa). 44–51 contributes to the ATP binding site; that stretch reads GENGSGKS.

The protein belongs to the ABC transporter superfamily.

The protein localises to the cell inner membrane. In terms of biological role, part of an ATP-driven transport system TP_0034/TP_0035/TP_0036 for a metal. Probably responsible for energy coupling to the transport system. The sequence is that of Probable metal transport system ATP-binding protein TP_0035 from Treponema pallidum (strain Nichols).